A 292-amino-acid chain; its full sequence is Ribosomal RNA small subunit methyltransferase A (292 aa).

Residues asparagine 29, leucine 31, glycine 56, glutamate 77, aspartate 102, and asparagine 127 each contribute to the S-adenosyl-L-methionine site.

Belongs to the class I-like SAM-binding methyltransferase superfamily. rRNA adenine N(6)-methyltransferase family. RsmA subfamily.

It is found in the cytoplasm. The catalysed reaction is adenosine(1518)/adenosine(1519) in 16S rRNA + 4 S-adenosyl-L-methionine = N(6)-dimethyladenosine(1518)/N(6)-dimethyladenosine(1519) in 16S rRNA + 4 S-adenosyl-L-homocysteine + 4 H(+). Functionally, specifically dimethylates two adjacent adenosines (A1518 and A1519) in the loop of a conserved hairpin near the 3'-end of 16S rRNA in the 30S particle. May play a critical role in biogenesis of 30S subunits. This chain is Ribosomal RNA small subunit methyltransferase A, found in Bacillus pumilus (strain SAFR-032).